Consider the following 307-residue polypeptide: Elongation factor Ts (307 aa).

The interval 79-82 (TDFV) is involved in Mg(2+) ion dislocation from EF-Tu.

The protein belongs to the EF-Ts family.

The protein localises to the cytoplasm. Associates with the EF-Tu.GDP complex and induces the exchange of GDP to GTP. It remains bound to the aminoacyl-tRNA.EF-Tu.GTP complex up to the GTP hydrolysis stage on the ribosome. In Sinorhizobium fredii (strain NBRC 101917 / NGR234), this protein is Elongation factor Ts.